A 59-amino-acid chain; its full sequence is Large ribosomal subunit protein uL30 (59 aa).

The protein belongs to the universal ribosomal protein uL30 family. In terms of assembly, part of the 50S ribosomal subunit.

In Sulfurihydrogenibium sp. (strain YO3AOP1), this protein is Large ribosomal subunit protein uL30.